The sequence spans 371 residues: uncharacterized protein (371 aa).

This sequence belongs to the glycerate kinase type-1 family.

This is an uncharacterized protein from Synechocystis sp. (strain ATCC 27184 / PCC 6803 / Kazusa).